The primary structure comprises 20 residues: Beta-fibrinogenase jerdofibrase (20 aa).

Residues 1-20 (VIGGDECNINEHPFLVLVYY) enclose the Peptidase S1 domain.

The protein belongs to the peptidase S1 family. Snake venom subfamily. Monomer. In terms of tissue distribution, expressed by the venom gland.

It localises to the secreted. Inhibited by PMSF and soybean trypsin inhibitor. Partially inhibited by DTT and cysteine. Not affected by EDTA. Its function is as follows. Fibrin(ogen)olytic serine protease degrades Bbeta-chain of human fibrinogen (FGB) and shows a lower activity on Aa-chain (FGA). Also degrades fibrin directly. Releases fibrinopeptide B and a small amount of fibrinopeptide A. Has also be shown to catalyze the hydrolysis of some chromogenic substrates such as S2238, S2160, S2302 and S2251. The sequence is that of Beta-fibrinogenase jerdofibrase from Protobothrops jerdonii (Jerdon's pitviper).